The primary structure comprises 344 residues: uncharacterized protein (344 aa).

Lysine 38 and tyrosine 167 together coordinate NADP(+).

This sequence belongs to the NAD(P)-dependent epimerase/dehydratase family. Dihydroflavonol-4-reductase subfamily.

This is an uncharacterized protein from Saccharomyces cerevisiae (strain ATCC 204508 / S288c) (Baker's yeast).